A 110-amino-acid polypeptide reads, in one-letter code: MALWMHLLTVLALLALWGPNTGQAFVSRHLCGSNLVETLYSVCQDDGFFYIPKDRRELEDPQVEQTELGMGLGAGGLQPLALEMALQKRGIVDQCCTGTCTRHQLQSYCN.

The N-terminal stretch at 1 to 24 is a signal peptide; the sequence is MALWMHLLTVLALLALWGPNTGQA. 3 cysteine pairs are disulfide-bonded: Cys-31/Cys-96, Cys-43/Cys-109, and Cys-95/Cys-100. The propeptide at 57 to 87 is c peptide; that stretch reads ELEDPQVEQTELGMGLGAGGLQPLALEMALQ.

The protein belongs to the insulin family. Heterodimer of a B chain and an A chain linked by two disulfide bonds.

Its subcellular location is the secreted. Functionally, insulin decreases blood glucose concentration. It increases cell permeability to monosaccharides, amino acids and fatty acids. It accelerates glycolysis, the pentose phosphate cycle, and glycogen synthesis in liver. The sequence is that of Insulin (INS) from Cavia porcellus (Guinea pig).